The following is a 363-amino-acid chain: Small ribosomal subunit biogenesis GTPase RsgA (363 aa).

Residues 112–268 (HQQVIAANID…LIDTPGMREL (157 aa)) enclose the CP-type G domain. GTP contacts are provided by residues 157–160 (TKAD) and 210–218 (GSSGAGKST). C291, C296, H298, and C304 together coordinate Zn(2+). The segment at 340–363 (RVAQNNRGKGSGKRPASIDRPGRR) is disordered.

It belongs to the TRAFAC class YlqF/YawG GTPase family. RsgA subfamily. As to quaternary structure, monomer. Associates with 30S ribosomal subunit, binds 16S rRNA. It depends on Zn(2+) as a cofactor.

It is found in the cytoplasm. Its function is as follows. One of several proteins that assist in the late maturation steps of the functional core of the 30S ribosomal subunit. Helps release RbfA from mature subunits. May play a role in the assembly of ribosomal proteins into the subunit. Circularly permuted GTPase that catalyzes slow GTP hydrolysis, GTPase activity is stimulated by the 30S ribosomal subunit. This chain is Small ribosomal subunit biogenesis GTPase RsgA, found in Xanthomonas oryzae pv. oryzae (strain MAFF 311018).